Reading from the N-terminus, the 107-residue chain is DNA polymerase delta subunit 4 (107 aa).

The PCNA-interaction protein motif (PIP box) signature appears at 1 to 16 (MGRKRLITDSYPVVKR). The segment at 1–35 (MGRKRLITDSYPVVKRREGSAGHSKGELAPDLGEE) is disordered. Basic and acidic residues predominate over residues 15–28 (KRREGSAGHSKGEL).

This sequence belongs to the DNA polymerase delta subunit 4 family. Component of the tetrameric DNA polymerase delta complex (Pol-delta4), which consists of POLD1/p125, POLD2/p50, POLD3/p66/p68 and POLD4/p12, with POLD1 bearing DNA polymerase and 3' to 5' proofreading exonuclease activities. Within this complex, directly interacts with POLD1 and POLD2. Directly interacts with PCNA, as do POLD1 and POLD3; this interaction stimulates Pol-delta4 polymerase activity. As POLD1 and POLD2, directly interacts with WRNIP1; this interaction stimulates DNA polymerase delta-mediated DNA synthesis, independently of the presence of PCNA, possibly by increasing initiation frequency. Upon genotoxic stress induced by DNA damaging agents or by replication stress, POLD4 is proteolytically degraded and Pol-delta4 is converted into a trimeric form of the complex (Pol-delta3) that has an increased proofreading activity. The DNA polymerase delta complex interacts with POLDIP2; this interaction is probably mediated through direct binding to POLD2. In terms of processing, ubiquitinated; undergoes 'Lys-48'-linked ubiquitination in response to UV irradiation, leading to proteasomal degradation. This modification is partly mediated by RNF8 and by the DCX(DTL) E3 ubiquitin ligase complex (also called CRL4(CDT2)). Efficient degradation requires the presence of PCNA and is required for the inhibition of fork progression after DNA damage.

It is found in the nucleus. Its function is as follows. As a component of the tetrameric DNA polymerase delta 4 complex (Pol-delta4), plays a role in high fidelity genome replication and repair. Within this complex, increases the rate of DNA synthesis and decreases fidelity by regulating POLD1 polymerase and proofreading 3' to 5' exonuclease activity. Pol-delta4 participates in Okazaki fragment processing, through both the short flap pathway, as well as a nick translation system. Under conditions of DNA replication stress, required for the repair of broken replication forks through break-induced replication (BIR), a mechanism that may induce segmental genomic duplications of up to 200 kb. Involved in Pol-delta4 translesion synthesis (TLS) of templates carrying O6-methylguanine or abasic sites. Its degradation in response to DNA damage is required for the inhibition of fork progression and cell survival. This chain is DNA polymerase delta subunit 4 (POLD4), found in Bos taurus (Bovine).